Consider the following 212-residue polypeptide: MKKSMLKNGLLLGLFALLCTGLVAIVNQLTYAKIKQQEQIELSRVLHQIIPDEIHDNELTEHCITIQDSDFLGTTQPLPAYIATRNGDGVAIAIETVAPDGYNGNIKIIIGLNKAGEVLGVRTLSHQETPGLGDKIELRKSDWVTKFNGLTVSSEKDKRWHVKKDGGQIDQFTGATITPRAYVNAVKLATLYFNEHKQKLLSAPASCEVDNE.

The chain crosses the membrane as a helical span at residues 9-29 (GLLLGLFALLCTGLVAIVNQL). Position 176 is an FMN phosphoryl threonine (threonine 176).

It belongs to the RnfG family. The complex is composed of six subunits: RnfA, RnfB, RnfC, RnfD, RnfE and RnfG. Requires FMN as cofactor.

The protein resides in the cell inner membrane. In terms of biological role, part of a membrane-bound complex that couples electron transfer with translocation of ions across the membrane. The protein is Ion-translocating oxidoreductase complex subunit G of Shewanella piezotolerans (strain WP3 / JCM 13877).